Here is a 136-residue protein sequence, read N- to C-terminus: Classical arabinogalactan protein 26 (136 aa).

A signal peptide spans 1 to 21 (MSVSLFTAFTVLSLCLHTSTS). The segment at 38-95 (APSSFSASTPAMSPDTSPLFPTPGSSEMSPSPSESSIMPTIPSSLSPPNPDAVTPDPL) is disordered. Polar residues predominate over residues 40–53 (SSFSASTPAMSPDT). Over residues 59–81 (TPGSSEMSPSPSESSIMPTIPSS) the composition is skewed to low complexity. The GPI-anchor amidated serine moiety is linked to residue Ser108. Positions 109–136 (SSVCLVSSQLSSLLLVLLMLLLAFCSFF) are cleaved as a propeptide — removed in mature form.

This sequence belongs to the classical AGP family. In terms of processing, O-glycosylated on the hydroxyproline residues.

Its subcellular location is the cell membrane. Proteoglycan that seems to be implicated in diverse developmental roles such as differentiation, cell-cell recognition, embryogenesis and programmed cell death. In Arabidopsis thaliana (Mouse-ear cress), this protein is Classical arabinogalactan protein 26 (AGP26).